The chain runs to 512 residues: ETS translocation variant 3 (512 aa).

Residues 35-116 (IQLWHFILEL…KGKRFTYKFN (82 aa)) constitute a DNA-binding region (ETS). The tract at residues 136–222 (VPQSAPPVPT…NAIGGGGIGH (87 aa)) is disordered. Phosphoserine occurs at positions 139, 159, and 315. Polar residues predominate over residues 158–184 (HSPTNDVQPGRFSASSLTASGQESSNG). The tract at residues 336–512 (PEESTQFSIK…QGLATAAADA (177 aa)) is disordered. A compositionally biased stretch (basic and acidic residues) spans 380–406 (IKVEPASEKDPESLRQSAREKEEHTQE). Lysine 381 participates in a covalent cross-link: Glycyl lysine isopeptide (Lys-Gly) (interchain with G-Cter in SUMO2). Lysine 388 bears the N6-acetyllysine; alternate mark. Residue lysine 388 forms a Glycyl lysine isopeptide (Lys-Gly) (interchain with G-Cter in SUMO2); alternate linkage. Over residues 443–452 (EPLEVTEDIE) the composition is skewed to acidic residues. 2 stretches are compositionally biased toward basic and acidic residues: residues 453 to 468 (DRPG…KEDA) and 479 to 491 (RWND…ELSK).

Belongs to the ETS family.

It is found in the nucleus. Transcriptional repressor that contribute to growth arrest during terminal macrophage differentiation by repressing target genes involved in Ras-dependent proliferation. Represses MMP1 promoter activity. This is ETS translocation variant 3 (ETV3) from Pan troglodytes (Chimpanzee).